A 67-amino-acid polypeptide reads, in one-letter code: Light-harvesting protein B-870 alpha chain (67 aa).

Topologically, residues 1–12 (MWRIWRLFDPMR) are cytoplasmic. Residues 13–33 (AMVAQAVFLLGLAVLIHLMLL) form a helical membrane-spanning segment. H29 contributes to the a bacteriochlorophyll binding site. Residues 34 to 67 (GTNKYNWLDGAKKAPVATAVAPVPAEVTSLAQAK) are Periplasmic-facing.

It belongs to the antenna complex alpha subunit family. An alpha/beta heterodimer. The core complex is formed by different alpha and beta chains, binding bacteriochlorophyll molecules, and arranged most probably in tetrameric structures disposed around the reaction center. The non-pigmented gamma chains may constitute additional components.

The protein localises to the cell inner membrane. Antenna complexes are light-harvesting systems, which transfer the excitation energy to the reaction centers. This is Light-harvesting protein B-870 alpha chain (pufA) from Rubrivivax gelatinosus (strain NBRC 100245 / IL144).